The following is a 1045-amino-acid chain: Endoglucanase B (1045 aa).

The N-terminal stretch at 1–33 (MLRQVPRTLVAGGSALAVAVGVLVAPLATGAAA) is a signal peptide. Residues 34–492 (APTYNYAEAL…LASFPTPEQP (459 aa)) form a catalytic region. Residue Asp91 is the Nucleophile of the active site. Residues His410, Asp449, and Glu458 contribute to the active site. Residues 493–642 (DGDQLFVEAM…STLVWGKEPT (150 aa)) form the CBM3 domain. Linker ('hinge') (Pro-Thr box) stretches follow at residues 644–650 (TTTDTTP), 734–748 (AAVT…ETEP), 831–846 (APVT…DTVA), and 931–944 (SPVT…TSTP). Fibronectin type-III domains follow at residues 653 to 743 (TPGT…TDTT), 751 to 840 (TPGT…TAAP), and 849 to 940 (VPGT…TLPV). Residues 939–1045 (PVTSTPSCTV…SFTVNGEVCG (107 aa)) enclose the CBM2 domain. A disulfide bond links Cys946 and Cys1044.

The protein belongs to the glycosyl hydrolase 9 (cellulase E) family.

It carries out the reaction Endohydrolysis of (1-&gt;4)-beta-D-glucosidic linkages in cellulose, lichenin and cereal beta-D-glucans.. Functionally, the biological conversion of cellulose to glucose generally requires three types of hydrolytic enzymes: (1) Endoglucanases which cut internal beta-1,4-glucosidic bonds; (2) Exocellobiohydrolases that cut the disaccharide cellobiose from the non-reducing end of the cellulose polymer chain; (3) Beta-1,4-glucosidases which hydrolyze the cellobiose and other short cello-oligosaccharides to glucose. This Cellulomonas fimi protein is Endoglucanase B (cenB).